A 479-amino-acid chain; its full sequence is Ribosomal RNA small subunit methyltransferase F (479 aa).

S-adenosyl-L-methionine contacts are provided by residues 125-131 (AAAPGSK), Glu-149, Asp-176, and Asp-194. The Nucleophile role is filled by Cys-247.

Belongs to the class I-like SAM-binding methyltransferase superfamily. RsmB/NOP family.

It is found in the cytoplasm. It carries out the reaction cytidine(1407) in 16S rRNA + S-adenosyl-L-methionine = 5-methylcytidine(1407) in 16S rRNA + S-adenosyl-L-homocysteine + H(+). In terms of biological role, specifically methylates the cytosine at position 1407 (m5C1407) of 16S rRNA. The polypeptide is Ribosomal RNA small subunit methyltransferase F (Salmonella agona (strain SL483)).